Here is a 102-residue protein sequence, read N- to C-terminus: NADH-quinone oxidoreductase subunit K (102 aa).

A run of 3 helical transmembrane segments spans residues Leu6–Val26, Ile30–Val50, and Val62–Leu82.

This sequence belongs to the complex I subunit 4L family. NDH-1 is composed of 13 different subunits. Subunits NuoA, H, J, K, L, M, N constitute the membrane sector of the complex.

The protein localises to the cell inner membrane. The enzyme catalyses a quinone + NADH + 5 H(+)(in) = a quinol + NAD(+) + 4 H(+)(out). Functionally, NDH-1 shuttles electrons from NADH, via FMN and iron-sulfur (Fe-S) centers, to quinones in the respiratory chain. The immediate electron acceptor for the enzyme in this species is believed to be ubiquinone. Couples the redox reaction to proton translocation (for every two electrons transferred, four hydrogen ions are translocated across the cytoplasmic membrane), and thus conserves the redox energy in a proton gradient. The sequence is that of NADH-quinone oxidoreductase subunit K from Pseudomonas syringae pv. tomato (strain ATCC BAA-871 / DC3000).